A 315-amino-acid polypeptide reads, in one-letter code: 10-epi-cubebol synthase (315 aa).

Positions 79, 220, 224, and 228 each coordinate Mg(2+). The short motif at 79 to 83 (DDVCE) is the DDXXD motif element. An NXXXSXXXE motif motif is present at residues 220–228 (NDIYSLRKE).

The protein belongs to the terpene synthase family. Mg(2+) serves as cofactor.

It catalyses the reaction (2E,6E)-farnesyl diphosphate + H2O = 10-epi-cubebol + diphosphate. Its function is as follows. Catalyzes the cyclization of farnesyl diphosphate (FPP) to 10-epi-cubebol. Is also responsible for the formation of many other sesquiterpenes, mainly cadalanes and cubebanes, including 1,10-di-epi-cubebol and the cadalanes delta-cadinene, T-cadinol and alpha-cadinol. In Sorangium cellulosum (strain So ce56) (Polyangium cellulosum (strain So ce56)), this protein is 10-epi-cubebol synthase.